Here is a 397-residue protein sequence, read N- to C-terminus: Ubiquitin-like modifier-activating enzyme 5 (397 aa).

ATP-binding residues include glycine 76, aspartate 97, lysine 120, asparagine 143, and asparagine 177. Zn(2+) is bound by residues cysteine 219 and cysteine 222. The Glycyl thioester intermediate role is filled by cysteine 243. Positions 296 and 301 each coordinate Zn(2+). Residues proline 343 to aspartate 384 are disordered.

Belongs to the ubiquitin-activating E1 family. UBA5 subfamily.

Its function is as follows. E1-like enzyme which activates UFM1. This Drosophila pseudoobscura pseudoobscura (Fruit fly) protein is Ubiquitin-like modifier-activating enzyme 5.